The primary structure comprises 193 residues: Molybdenum cofactor guanylyltransferase (193 aa).

Residues 8–10, Lys-21, Asp-67, and Asp-98 each bind GTP; that span reads LAG. Asp-98 lines the Mg(2+) pocket.

The protein belongs to the MobA family. In terms of assembly, monomer. Requires Mg(2+) as cofactor.

The protein localises to the cytoplasm. It carries out the reaction Mo-molybdopterin + GTP + H(+) = Mo-molybdopterin guanine dinucleotide + diphosphate. Functionally, transfers a GMP moiety from GTP to Mo-molybdopterin (Mo-MPT) cofactor (Moco or molybdenum cofactor) to form Mo-molybdopterin guanine dinucleotide (Mo-MGD) cofactor. In Cereibacter sphaeroides (Rhodobacter sphaeroides), this protein is Molybdenum cofactor guanylyltransferase.